The following is a 339-amino-acid chain: UDP-3-O-acylglucosamine N-acyltransferase (339 aa).

The active-site Proton acceptor is H238.

It belongs to the transferase hexapeptide repeat family. LpxD subfamily. In terms of assembly, homotrimer.

The catalysed reaction is a UDP-3-O-[(3R)-3-hydroxyacyl]-alpha-D-glucosamine + a (3R)-hydroxyacyl-[ACP] = a UDP-2-N,3-O-bis[(3R)-3-hydroxyacyl]-alpha-D-glucosamine + holo-[ACP] + H(+). The protein operates within bacterial outer membrane biogenesis; LPS lipid A biosynthesis. Catalyzes the N-acylation of UDP-3-O-acylglucosamine using 3-hydroxyacyl-ACP as the acyl donor. Is involved in the biosynthesis of lipid A, a phosphorylated glycolipid that anchors the lipopolysaccharide to the outer membrane of the cell. The sequence is that of UDP-3-O-acylglucosamine N-acyltransferase from Aeromonas hydrophila subsp. hydrophila (strain ATCC 7966 / DSM 30187 / BCRC 13018 / CCUG 14551 / JCM 1027 / KCTC 2358 / NCIMB 9240 / NCTC 8049).